The sequence spans 547 residues: Probable bifunctional tRNA threonylcarbamoyladenosine biosynthesis protein (547 aa).

Positions 1–329 (MKKTFILGIE…FRTDDVKVTW (329 aa)) are kae1. Positions 113, 117, and 134 each coordinate Fe cation. L-threonylcarbamoyladenylate contacts are provided by residues 134-138 (YVSGA), D166, G179, E183, and N262. D290 serves as a coordination point for Fe cation. In terms of domain architecture, Protein kinase spans 340 to 547 (EISPETFFRM…EEIKKRARYA (208 aa)). ATP-binding positions include 355-363 (LDNGAEAVV) and K377. Residue D464 is the Proton acceptor; for kinase activity of the active site.

It in the N-terminal section; belongs to the KAE1 / TsaD family. This sequence in the C-terminal section; belongs to the protein kinase superfamily. Tyr protein kinase family. BUD32 subfamily. Component of the KEOPS complex that consists of Kae1, Bud32, Cgi121 and Pcc1; the whole complex dimerizes. Requires Fe(2+) as cofactor.

The protein resides in the cytoplasm. The enzyme catalyses L-seryl-[protein] + ATP = O-phospho-L-seryl-[protein] + ADP + H(+). It catalyses the reaction L-threonyl-[protein] + ATP = O-phospho-L-threonyl-[protein] + ADP + H(+). It carries out the reaction L-threonylcarbamoyladenylate + adenosine(37) in tRNA = N(6)-L-threonylcarbamoyladenosine(37) in tRNA + AMP + H(+). Functionally, required for the formation of a threonylcarbamoyl group on adenosine at position 37 (t(6)A37) in tRNAs that read codons beginning with adenine. Is a component of the KEOPS complex that is probably involved in the transfer of the threonylcarbamoyl moiety of threonylcarbamoyl-AMP (TC-AMP) to the N6 group of A37. The Kae1 domain likely plays a direct catalytic role in this reaction. The Bud32 domain probably displays kinase activity that regulates Kae1 function. This is Probable bifunctional tRNA threonylcarbamoyladenosine biosynthesis protein from Methanosarcina mazei (strain ATCC BAA-159 / DSM 3647 / Goe1 / Go1 / JCM 11833 / OCM 88) (Methanosarcina frisia).